A 305-amino-acid polypeptide reads, in one-letter code: MPWIQIKIITSKQHDNLLETLLLETGAVSVTFQDAGDQPIFEPLPGELKFWDDIEIAGLYEADNNLHEHQTKIAAAINKIKAMCEPGQHFIYKIEHLEDKQWEREWMIHFHPMRFGQRLWVCPSMQAVPDPSAVNVILDPGLAFGTGTHPTTALCLEWLDSLDLQNKILIDFGCGSGILAIAALKLGAKQAIGIDIDPQAIEASRDNAQRNGVSEHLVLYLSGQEPKNLQADVVVANILAAPLCELAGVIADLVKPDGYLGLSGILNTQSDKVSQAYQHAFCLYPIAEKEEWCRITAVKNKNDGI.

S-adenosyl-L-methionine-binding residues include Thr-152, Gly-173, Asp-195, and Asn-237.

This sequence belongs to the methyltransferase superfamily. PrmA family.

Its subcellular location is the cytoplasm. The enzyme catalyses L-lysyl-[protein] + 3 S-adenosyl-L-methionine = N(6),N(6),N(6)-trimethyl-L-lysyl-[protein] + 3 S-adenosyl-L-homocysteine + 3 H(+). In terms of biological role, methylates ribosomal protein L11. The polypeptide is Ribosomal protein L11 methyltransferase (Hamiltonella defensa subsp. Acyrthosiphon pisum (strain 5AT)).